Consider the following 486-residue polypeptide: NADH-quinone oxidoreductase subunit N (486 aa).

14 consecutive transmembrane segments (helical) span residues 14-34, 45-65, 77-97, 105-125, 130-150, 163-183, 203-223, 237-257, 268-288, 299-319, 326-346, 377-397, 409-429, and 459-479; these read SIAP…LNFI, MLAI…SGIV, FAFI…PLTL, CSLA…EFMV, LIVI…LIAL, YFTM…IFYL, ILIA…LSLI, SEVM…IVAM, IAFI…LANI, MLAF…VIGT, LFLY…VLWF, FLMA…VFWG, GFIF…YYYL, and FIIT…KFWT.

Belongs to the complex I subunit 2 family. As to quaternary structure, NDH-1 is composed of 14 different subunits. Subunits NuoA, H, J, K, L, M, N constitute the membrane sector of the complex.

It is found in the cell inner membrane. The catalysed reaction is a quinone + NADH + 5 H(+)(in) = a quinol + NAD(+) + 4 H(+)(out). NDH-1 shuttles electrons from NADH, via FMN and iron-sulfur (Fe-S) centers, to quinones in the respiratory chain. The immediate electron acceptor for the enzyme in this species is believed to be ubiquinone. Couples the redox reaction to proton translocation (for every two electrons transferred, four hydrogen ions are translocated across the cytoplasmic membrane), and thus conserves the redox energy in a proton gradient. This chain is NADH-quinone oxidoreductase subunit N, found in Campylobacter hominis (strain ATCC BAA-381 / DSM 21671 / CCUG 45161 / LMG 19568 / NCTC 13146 / CH001A).